A 703-amino-acid chain; its full sequence is Bifunctional arginine dihydrolase/ornithine cyclodeaminase AgrE (703 aa).

The arginine dihydrolase stretch occupies residues 10-269 (CPPDHYDVDY…GAAKCLTLRV (260 aa)). L-arginine-binding residues include N22, D65, N71, R90, and R139. N22 contributes to the L-ornithine binding site. Positions 90, 139, and 168 each coordinate L-ornithine. H168 acts as the Proton donor/acceptor in catalysis. Residues D170 and A258 each contribute to the L-arginine site. Position 264 (C264) interacts with L-ornithine. C264 acts as the Nucleophile in catalysis. The interval 285 to 694 (SRIIRIEGHL…SLLTQQLDKL (410 aa)) is ornithine cyclodeaminase. Residues N524, A525, D603, S635, M636, L637, H638, D656, D679, and V680 each contribute to the NAD(+) site.

It in the N-terminal section; belongs to the DDAH family. The protein in the C-terminal section; belongs to the AgrE/ArgZ ornithine cyclodeaminase family. In terms of assembly, homotetramer. The cofactor is NAD(+).

It catalyses the reaction L-arginine + 2 H2O + 2 H(+) = L-ornithine + 2 NH4(+) + CO2. The catalysed reaction is L-ornithine = L-proline + NH4(+). Its activity is regulated as follows. Ornithine cyclodeaminase activity is inhibited by ATP. Its function is as follows. Bifunctional enzyme involved in a cyanobacterial arginine utilization pathway that produces glutamate and enables cellular adaptation to nitrogen fluctuations. Catalyzes the hydrolysis of arginine to ornithine, with the release of ammonia and carbon dioxide. Then, catalyzes the conversion of ornithine to proline, with the release of ammonia. The chain is Bifunctional arginine dihydrolase/ornithine cyclodeaminase AgrE from Nostoc sp. (strain PCC 7120 / SAG 25.82 / UTEX 2576).